A 212-amino-acid chain; its full sequence is Pyridoxine/pyridoxamine 5'-phosphate oxidase (212 aa).

Residues 9–12 (RKSY) and Lys67 contribute to the substrate site. FMN contacts are provided by residues 62-67 (RIVLIK), 77-78 (FT), Arg83, and Lys84. Residues Tyr124, Arg128, and Ser132 each coordinate substrate. Residues 141-142 (QS) and Trp185 each bind FMN. 191–193 (RLH) lines the substrate pocket. Arg195 provides a ligand contact to FMN.

Belongs to the pyridoxamine 5'-phosphate oxidase family. Homodimer. Requires FMN as cofactor.

It carries out the reaction pyridoxamine 5'-phosphate + O2 + H2O = pyridoxal 5'-phosphate + H2O2 + NH4(+). The catalysed reaction is pyridoxine 5'-phosphate + O2 = pyridoxal 5'-phosphate + H2O2. The protein operates within cofactor metabolism; pyridoxal 5'-phosphate salvage; pyridoxal 5'-phosphate from pyridoxamine 5'-phosphate: step 1/1. It functions in the pathway cofactor metabolism; pyridoxal 5'-phosphate salvage; pyridoxal 5'-phosphate from pyridoxine 5'-phosphate: step 1/1. Its function is as follows. Catalyzes the oxidation of either pyridoxine 5'-phosphate (PNP) or pyridoxamine 5'-phosphate (PMP) into pyridoxal 5'-phosphate (PLP). This chain is Pyridoxine/pyridoxamine 5'-phosphate oxidase, found in Verminephrobacter eiseniae (strain EF01-2).